The following is a 122-amino-acid chain: Large ribosomal subunit protein eL34 (122 aa).

Belongs to the eukaryotic ribosomal protein eL34 family.

This Dictyostelium discoideum (Social amoeba) protein is Large ribosomal subunit protein eL34 (rpl34).